Here is a 518-residue protein sequence, read N- to C-terminus: Fusicoccin H C-9 hydroxylase (518 aa).

The chain crosses the membrane as a helical span at residues 12 to 29; sequence HLLLISTVIAVLAALIVS. Asn81 and Asn168 each carry an N-linked (GlcNAc...) asparagine glycan. A heme-binding site is contributed by Cys456.

Belongs to the cytochrome P450 family. Heme serves as cofactor.

Its subcellular location is the membrane. It participates in mycotoxin biosynthesis. In terms of biological role, cytochrome P450 monooxygenase; part of the 2 gene clusters that mediate the biosynthesis of fusicoccins, diterpene glucosides that display phytohormone-like activity and function as potent activators of plasma membrane H(+)-ATPases in plants by modifying 14-3-3 proteins and cause the plant disease constriction canker. The first step in the pathway is performed by the fusicoccadiene synthase PaFS that possesses both prenyl transferase and terpene cyclase activity, converting isopentenyl diphosphate and dimethylallyl diphosphate into geranylgeranyl diphosphate (GGDP) and successively converting GGDP into fusicocca-2,10(14)-diene, a precursor for fusicoccin H. The second step is the oxidation at the C-8 position by the cytochrome P450 monooxygenase PaP450-2 to yield fusicocca-2,10(14)-diene-8-beta-ol. The cytochrome P450 monooxygenase PaP450-1 then catalyzes the hydroxylation at the C-16 position to produce fusicocca-2,10(14)-diene-8-beta,16-diol. The dioxygenase fc-dox then catalyzes the 16-oxydation of fusicocca-2,10(14)-diene-8-beta,16-diol to yield an aldehyde (8-beta-hydroxyfusicocca-1,10(14)-dien-16-al). The short-chain dehydrogenase/reductase fc-sdr catalyzes the reduction of the aldehyde to yield fusicocca-1,10(14)-diene-8-beta,16-diol. The next step is the hydroxylation at C-9 performed by the cytochrome P450 monooxygenase PaP450-3 that leads to fusicoccin H aglycon which is glycosylated to fusicoccin H by the O-glycosyltransferase PaGT. Hydroxylation at C-12 by the cytochrome P450 monooxygenase PaP450-4 leads then to the production of fusicoccin Q and is followed by methylation by the O-methyltransferase PaMT to yield fusicoccin P. Fusicoccin P is further converted to fusicoccin J via prenylation by the O-glucose prenyltransferase PaPT. Cytochrome P450 monooxygenase PaP450-5 then performs hydroxylation at C-19 to yield dideacetyl-fusicoccin A which is acetylated to 3'-O-deacetyl-fusicoccin A by the O-acetyltransferase PaAT-2. Finally, a another acetylation by the O-acetyltransferase PaAT-1 yields fusicoccin A. The chain is Fusicoccin H C-9 hydroxylase from Phomopsis amygdali (Fusicoccum amygdali).